Here is a 449-residue protein sequence, read N- to C-terminus: Glycine receptor subunit alpha-2 (449 aa).

A signal peptide spans 1–27 (MTRPSVKLLTTLLACLMEMLNFRVSSG). Topologically, residues 28 to 255 (KDPDLLSSSS…FHLERQMGYY (228 aa)) are extracellular. A glycan (N-linked (GlcNAc...) asparagine) is linked at N70. Residues R97 and S161 each coordinate glycine. R97 is a strychnine binding site. The cysteines at positions 170 and 184 are disulfide-linked. Zn(2+) contacts are provided by E224 and D226. The cysteines at positions 230 and 241 are disulfide-linked. Position 236 (T236) interacts with glycine. Residue H247 participates in Zn(2+) binding. A helical transmembrane segment spans residues 256–276 (LIQMYIPSLLIVILSWVSFWI). The Cytoplasmic segment spans residues 277–282 (NMDAAP). A helical membrane pass occupies residues 283 to 302 (ARVALGITTVLTMTTQSSGS). The Extracellular portion of the chain corresponds to 303-313 (RASLPKVSYVK). A helical transmembrane segment spans residues 314-334 (AIDIWMAVCLLFVFAALLEYA). The Cytoplasmic portion of the chain corresponds to 335–420 (GVNFVSRQQK…RAKRIDTISR (86 aa)). A helical membrane pass occupies residues 421–441 (AAFPLAFLIFNVFYWITYKII). At 442 to 449 (RHESARKD) the chain is on the extracellular side.

This sequence belongs to the ligand-gated ion channel (TC 1.A.9) family.

The protein resides in the postsynaptic cell membrane. It localises to the synapse. The protein localises to the cell membrane. Its subcellular location is the cell projection. It carries out the reaction chloride(in) = chloride(out). Its activity is regulated as follows. Channel opening is triggered by extracellular glycine. Channel opening is also triggered by taurine and beta-alanine. Inhibited by strychnine. Its function is as follows. Subunit of heteromeric glycine-gated chloride channels. Plays a role in synaptic plasticity. Contributes to the generation of inhibitory postsynaptic currents, and is involved in the down-regulation of neuronal excitability. This chain is Glycine receptor subunit alpha-2 (glra2), found in Danio rerio (Zebrafish).